Reading from the N-terminus, the 164-residue chain is ATP synthase subunit b 2 (164 aa).

A helical transmembrane segment spans residues 4–24; that stretch reads TFWAFVGLVLFLALLVYFQIP.

This sequence belongs to the ATPase B chain family. F-type ATPases have 2 components, F(1) - the catalytic core - and F(0) - the membrane proton channel. F(1) has five subunits: alpha(3), beta(3), gamma(1), delta(1), epsilon(1). F(0) has three main subunits: a(1), b(2) and c(10-14). The alpha and beta chains form an alternating ring which encloses part of the gamma chain. F(1) is attached to F(0) by a central stalk formed by the gamma and epsilon chains, while a peripheral stalk is formed by the delta and b chains.

It is found in the cell inner membrane. In terms of biological role, f(1)F(0) ATP synthase produces ATP from ADP in the presence of a proton or sodium gradient. F-type ATPases consist of two structural domains, F(1) containing the extramembraneous catalytic core and F(0) containing the membrane proton channel, linked together by a central stalk and a peripheral stalk. During catalysis, ATP synthesis in the catalytic domain of F(1) is coupled via a rotary mechanism of the central stalk subunits to proton translocation. Functionally, component of the F(0) channel, it forms part of the peripheral stalk, linking F(1) to F(0). The protein is ATP synthase subunit b 2 of Bartonella tribocorum (strain CIP 105476 / IBS 506).